The following is a 419-amino-acid chain: Argininosuccinate synthase (419 aa).

Residues 9-17 (AYSGGLDTS) and Ala35 contribute to the ATP site. Residues Tyr86 and Ser91 each coordinate L-citrulline. 114–122 (AHGATGKGN) contributes to the ATP binding site. 3 residues coordinate L-aspartate: Thr118, Asn122, and Asp123. Asn122 is an L-citrulline binding site. Positions 126, 179, 188, 270, and 282 each coordinate L-citrulline.

Belongs to the argininosuccinate synthase family. Type 1 subfamily. As to quaternary structure, homotetramer.

It carries out the reaction L-citrulline + L-aspartate + ATP = 2-(N(omega)-L-arginino)succinate + AMP + diphosphate + H(+). Its pathway is amino-acid biosynthesis; L-arginine biosynthesis; L-arginine from L-ornithine and carbamoyl phosphate: step 2/3. It functions in the pathway nitrogen metabolism; urea cycle; (N(omega)-L-arginino)succinate from L-aspartate and L-citrulline: step 1/1. The polypeptide is Argininosuccinate synthase (Drosophila melanogaster (Fruit fly)).